Here is a 339-residue protein sequence, read N- to C-terminus: Dihydroorotase (339 aa).

2 residues coordinate Zn(2+): His12 and His14. Residues 14–16 (HVR) and Asn40 each bind substrate. 4 residues coordinate Zn(2+): Lys94, His133, His167, and Asp239. Position 94 is an N6-carboxylysine (Lys94). His133 is a substrate binding site. Asp239 is a catalytic residue. Substrate is bound by residues His243 and Ala255.

The protein belongs to the metallo-dependent hydrolases superfamily. DHOase family. Class II DHOase subfamily. In terms of assembly, homodimer. It depends on Zn(2+) as a cofactor.

The catalysed reaction is (S)-dihydroorotate + H2O = N-carbamoyl-L-aspartate + H(+). It participates in pyrimidine metabolism; UMP biosynthesis via de novo pathway; (S)-dihydroorotate from bicarbonate: step 3/3. Its function is as follows. Catalyzes the reversible cyclization of carbamoyl aspartate to dihydroorotate. In Helicobacter pylori (strain J99 / ATCC 700824) (Campylobacter pylori J99), this protein is Dihydroorotase.